Here is a 485-residue protein sequence, read N- to C-terminus: RAC-beta serine/threonine-protein kinase B (485 aa).

The PH domain occupies 5–109 (MVIKEGWLQK…WIIAIQTVAN (105 aa)). Residues Ser-132 and Ser-135 are each glycosylated (O-linked (GlcNAc) serine). Positions 156 to 413 (FDYLKLLGKG…AQEVMSHGFF (258 aa)) constitute a Protein kinase domain. ATP contacts are provided by residues 162–170 (LGKGTFGKV) and Lys-185. Asp-279 (proton acceptor) is an active-site residue. A glycan (O-linked (GlcNAc) threonine) is linked at Thr-310. Thr-313 bears the Phosphothreonine mark. Residue Thr-317 is glycosylated (O-linked (GlcNAc) threonine). The AGC-kinase C-terminal domain occupies 414 to 485 (ASINWQDVTE…QFSYSSSIRE (72 aa)). The disordered stretch occupies residues 454–485 (LTPPDRYDNLDALESEQRPHFPQFSYSSSIRE). Positions 458-472 (DRYDNLDALESEQRP) are enriched in basic and acidic residues. Phosphoserine is present on Ser-478. Ser-478 carries an O-linked (GlcNAc) serine; alternate glycan.

The protein belongs to the protein kinase superfamily. AGC Ser/Thr protein kinase family. RAC subfamily. In terms of processing, phosphorylation on Thr-313 and Ser-478 is required for full activity. Phosphorylation of the activation loop at Thr-313 by PDPK1/PDK1 is a prerequisite for full activation. Phosphorylation by mTORC2 at Ser-478 in response to growth factors plays a key role in AKT1 activation by facilitating subsequent phosphorylation of the activation loop by PDPK1/PDK1.

It carries out the reaction L-seryl-[protein] + ATP = O-phospho-L-seryl-[protein] + ADP + H(+). The catalysed reaction is L-threonyl-[protein] + ATP = O-phospho-L-threonyl-[protein] + ADP + H(+). With respect to regulation, two specific sites, one in the kinase domain (Thr-313) and the other in the C-terminal regulatory region (Ser-478), need to be phosphorylated for its full activation. In terms of biological role, akt2-b is one of several closely related serine/threonine-protein kinases known as the AKT kinase, and which regulate many processes including metabolism, proliferation, cell survival, growth and angiogenesis. This is mediated through serine and/or threonine phosphorylation of a range of downstream substrates. Over 100 substrate candidates have been reported so far, but for most of them, no isoform specificity has been reported. May be involved in the inhibition of ciliogenesis. This is RAC-beta serine/threonine-protein kinase B (akt2-b) from Xenopus laevis (African clawed frog).